Here is a 661-residue protein sequence, read N- to C-terminus: UvrABC system protein C (661 aa).

Residues Ala26 to Val105 enclose the GIY-YIG domain. Positions Asp215–Leu250 constitute a UVR domain.

The protein belongs to the UvrC family. As to quaternary structure, interacts with UvrB in an incision complex.

It localises to the cytoplasm. Functionally, the UvrABC repair system catalyzes the recognition and processing of DNA lesions. UvrC both incises the 5' and 3' sides of the lesion. The N-terminal half is responsible for the 3' incision and the C-terminal half is responsible for the 5' incision. The chain is UvrABC system protein C from Synechococcus sp. (strain CC9902).